Here is a 389-residue protein sequence, read N- to C-terminus: tRNA-specific 2-thiouridylase MnmA (389 aa).

ATP contacts are provided by residues Gly-35 to Ser-42 and Met-61. Residues Asn-121–Asp-123 are interaction with target base in tRNA. The active-site Nucleophile is Cys-126. A disulfide bond links Cys-126 and Cys-223. Gly-151 provides a ligand contact to ATP. Residues Lys-173–Gln-175 are interaction with tRNA. Cys-223 acts as the Cysteine persulfide intermediate in catalysis. An interaction with tRNA region spans residues Arg-335–Tyr-336.

The protein belongs to the MnmA/TRMU family.

Its subcellular location is the cytoplasm. The catalysed reaction is S-sulfanyl-L-cysteinyl-[protein] + uridine(34) in tRNA + AH2 + ATP = 2-thiouridine(34) in tRNA + L-cysteinyl-[protein] + A + AMP + diphosphate + H(+). Its function is as follows. Catalyzes the 2-thiolation of uridine at the wobble position (U34) of tRNA, leading to the formation of s(2)U34. This chain is tRNA-specific 2-thiouridylase MnmA, found in Actinobacillus pleuropneumoniae serotype 5b (strain L20).